We begin with the raw amino-acid sequence, 275 residues long: Bis(5'-nucleosyl)-tetraphosphatase, symmetrical (275 aa).

The protein belongs to the Ap4A hydrolase family.

The enzyme catalyses P(1),P(4)-bis(5'-adenosyl) tetraphosphate + H2O = 2 ADP + 2 H(+). Its function is as follows. Hydrolyzes diadenosine 5',5'''-P1,P4-tetraphosphate to yield ADP. This is Bis(5'-nucleosyl)-tetraphosphatase, symmetrical from Photorhabdus laumondii subsp. laumondii (strain DSM 15139 / CIP 105565 / TT01) (Photorhabdus luminescens subsp. laumondii).